The chain runs to 316 residues: F-box protein At4g09920 (316 aa).

The F-box domain occupies 1-47 (MDRIIGLPDEVLVKILSFVPTKVAVSTSILSKRWEFLWMWLTKLKFG).

In Arabidopsis thaliana (Mouse-ear cress), this protein is F-box protein At4g09920.